The primary structure comprises 423 residues: COP9 signalosome complex subunit 3 (423 aa).

The PCI domain maps to 197 to 365 (NFERALYFYE…GMVCFHDNPE (169 aa)). The tract at residues 402–423 (QFVQKSMGSQEDDSGTKPSSYS) is disordered.

Belongs to the CSN3 family. Component of the CSN complex, probably composed of COPS1, COPS2, COPS3, COPS4, COPS5, COPS6, COPS7, COPS8 and COPS9.

It is found in the cytoplasm. Its subcellular location is the nucleus. Its function is as follows. Component of the COP9 signalosome complex (CSN), a complex involved in various cellular and developmental processes. The CSN complex is an essential regulator of the ubiquitin (Ubl) conjugation pathway by mediating the deneddylation of the cullin subunits of E3 ligase complexes, leading to modify the Ubl ligase activity. In Gallus gallus (Chicken), this protein is COP9 signalosome complex subunit 3 (COPS3).